A 491-amino-acid polypeptide reads, in one-letter code: Iota-carrageenase (491 aa).

Residues 1-23 form the signal peptide; it reads MRLYFRKLWLTNLFLGGALASSA. Cystine bridges form between cysteine 269–cysteine 298, cysteine 336–cysteine 360, cysteine 408–cysteine 476, and cysteine 412–cysteine 484.

This sequence belongs to the glycosyl hydrolase 82 family.

The protein resides in the secreted. It catalyses the reaction Endohydrolysis of 1,4-beta-D-linkages between D-galactose 4-sulfate and 3,6-anhydro-D-galactose-2-sulfate in iota-carrageenans.. Hydrolyzes iota-carrageenans, sulfated 1,3-alpha-1,4-beta galactans from red algal cell walls, with an inversion of anomeric configuration. Also active against hybrid iota-/nu-carrageenan, not active against kappa- or lambda-carrageenans. The polypeptide is Iota-carrageenase (Alteromonas macleodii (Pseudoalteromonas macleodii)).